The following is a 365-amino-acid chain: Protein-glutamate methylesterase/protein-glutamine glutaminase 1 (365 aa).

In terms of domain architecture, Response regulatory spans 4–121 (KVLVVDDSQF…SRDSVVLKKR (118 aa)). The residue at position 55 (Asp55) is a 4-aspartylphosphate. The tract at residues 138 to 173 (AARSTTQPSGVRPSALGANLSSSRSPRPASSAPSAP) is disordered. Residues 158–172 (SSSRSPRPASSAPSA) show a composition bias toward low complexity. The CheB-type methylesterase domain occupies 182 to 365 (KLVAIGASTG…QVWQRLVSDV (184 aa)). Active-site residues include Ser189, His216, and Asp310.

The protein belongs to the CheB family. In terms of processing, phosphorylated by CheA. Phosphorylation of the N-terminal regulatory domain activates the methylesterase activity.

The protein localises to the cytoplasm. The enzyme catalyses [protein]-L-glutamate 5-O-methyl ester + H2O = L-glutamyl-[protein] + methanol + H(+). It carries out the reaction L-glutaminyl-[protein] + H2O = L-glutamyl-[protein] + NH4(+). Its function is as follows. Involved in chemotaxis. Part of a chemotaxis signal transduction system that modulates chemotaxis in response to various stimuli. Catalyzes the demethylation of specific methylglutamate residues introduced into the chemoreceptors (methyl-accepting chemotaxis proteins or MCP) by CheR. Also mediates the irreversible deamidation of specific glutamine residues to glutamic acid. The protein is Protein-glutamate methylesterase/protein-glutamine glutaminase 1 of Saccharophagus degradans (strain 2-40 / ATCC 43961 / DSM 17024).